The chain runs to 419 residues: Gamma-glutamyl phosphate reductase (419 aa).

This sequence belongs to the gamma-glutamyl phosphate reductase family.

It localises to the cytoplasm. It carries out the reaction L-glutamate 5-semialdehyde + phosphate + NADP(+) = L-glutamyl 5-phosphate + NADPH + H(+). It functions in the pathway amino-acid biosynthesis; L-proline biosynthesis; L-glutamate 5-semialdehyde from L-glutamate: step 2/2. Functionally, catalyzes the NADPH-dependent reduction of L-glutamate 5-phosphate into L-glutamate 5-semialdehyde and phosphate. The product spontaneously undergoes cyclization to form 1-pyrroline-5-carboxylate. The sequence is that of Gamma-glutamyl phosphate reductase from Nitratidesulfovibrio vulgaris (strain DP4) (Desulfovibrio vulgaris).